Reading from the N-terminus, the 1330-residue chain is Nephrocystin-3 (1330 aa).

The N-myristoyl glycine moiety is linked to residue Gly2. Residues 83–207 adopt a coiled-coil conformation; that stretch reads ELEYAAAEYE…QRLQAQGIQV (125 aa). TPR repeat units follow at residues 471–504, 885–918, 920–942, 943–976, 985–1018, 1027–1060, 1093–1126, 1135–1168, 1177–1210, 1219–1252, and 1261–1294; these read IPEEDDFGDVLWDIHDEQEQMETFQQASNSAHEL, CLLNLFVSQNLYKRGHFAELLSYWQFVGKDKSAM, TEYFDSLKQYEKNCEGEDNMSCL, ADLYETLGRFLKDLGLLSQAIVPLQRSLEIRETA, AQSLHQLASVYVQWKKFGNAEQLYKQALEISENA, ARELEALATLYQKQNKYEQAEHFRKKSFKIHQKA, ARTLNELGVLYYLQNNLETADQFLKRSLEMRERV, AQSLNNLAALCNEKKQYDKAEELYERALDIRRRA, AYTVKHLAILYKKMGKLDKAVPLYELAVEIRQKS, ATALVNLAVLYSQMKKHVEALPLYERALKIYEDS, and GETLKNLAVLSYEGGDFEKAAELYKRAMEIKEAE. Residues 1296 to 1330 form a disordered region; the sequence is SLLGGKAPSRHSSSGDTFSLKTAHSPNVFLQQGQR. A compositionally biased stretch (polar residues) spans 1305-1330; it reads RHSSSGDTFSLKTAHSPNVFLQQGQR.

Interacts with NPHP1 and INVS/NPHP2. Interacts (when myristoylated) with UNC119 and UNC119B; interaction is required for localization to cilium. Interacts with CEP164. Component of a complex containing at least ANKS6, INVS, NEK8 and NPHP3. ANKS6 may organize complex assembly by linking INVS and NPHP3 to NEK8 and INVS may target the complex to the proximal ciliary axoneme. As to expression, widely expressed at low level. Expressed in heart, placenta, liver, skeletal muscle, kidney and pancreas. Expressed at very low level in brain and lung.

It localises to the cell projection. The protein resides in the cilium. Functionally, required for normal ciliary development and function. Inhibits disheveled-1-induced canonical Wnt-signaling activity and may also play a role in the control of non-canonical Wnt signaling which regulates planar cell polarity. Probably acts as a molecular switch between different Wnt signaling pathways. Required for proper convergent extension cell movements. The sequence is that of Nephrocystin-3 (NPHP3) from Homo sapiens (Human).